A 127-amino-acid chain; its full sequence is Aspartate 1-decarboxylase (127 aa).

The active-site Schiff-base intermediate with substrate; via pyruvic acid is the Ser25. Ser25 carries the post-translational modification Pyruvic acid (Ser). Thr57 contacts substrate. Tyr58 serves as the catalytic Proton donor. 73 to 75 (GAA) is a substrate binding site.

It belongs to the PanD family. As to quaternary structure, heterooctamer of four alpha and four beta subunits. Requires pyruvate as cofactor. Is synthesized initially as an inactive proenzyme, which is activated by self-cleavage at a specific serine bond to produce a beta-subunit with a hydroxyl group at its C-terminus and an alpha-subunit with a pyruvoyl group at its N-terminus.

It is found in the cytoplasm. It carries out the reaction L-aspartate + H(+) = beta-alanine + CO2. It participates in cofactor biosynthesis; (R)-pantothenate biosynthesis; beta-alanine from L-aspartate: step 1/1. In terms of biological role, catalyzes the pyruvoyl-dependent decarboxylation of aspartate to produce beta-alanine. This chain is Aspartate 1-decarboxylase, found in Anoxybacillus flavithermus (strain DSM 21510 / WK1).